The following is a 136-amino-acid chain: Keratin-associated protein 9-3 (136 aa).

11 repeat units span residues 3 to 7 (CCATS), 21 to 25 (CCQPT), 31 to 35 (CCQPS), 36 to 40 (CCEAS), 41 to 45 (CCQPS), 46 to 50 (CCETG), 87 to 91 (CCVVS), 97 to 101 (CCQLH), 107 to 111 (CCRPS), 117 to 121 (CCRPA), and 126 to 130 (CCQPS). Residues 21-130 (CCQPTCTQSS…ACCCYCCQPS (110 aa)) form an 11 X 5 AA repeats of C-C-[AEQVR]-[ALPTV]-[AGHST] region.

Belongs to the KRTAP type 9 family. In terms of assembly, interacts with hair keratins.

In the hair cortex, hair keratin intermediate filaments are embedded in an interfilamentous matrix, consisting of hair keratin-associated proteins (KRTAP), which are essential for the formation of a rigid and resistant hair shaft through their extensive disulfide bond cross-linking with abundant cysteine residues of hair keratins. The matrix proteins include the high-sulfur and high-glycine-tyrosine keratins. This is Keratin-associated protein 9-3 from Mus musculus (Mouse).